The following is a 239-amino-acid chain: MIINAKGPASFAEKYIVRSIWENKFPPGSILPAERELSELIGVTRTTLREVLQRLARDGWLKIQHGKPTQVNNFWETSGLNILETIADLNPDGFPLLVDQLMAARGNVSNIYFRASIRHNPEKVVEVLAGIHSLENDAEAYATFDYQLHHTLAFASGNPLYVLILNGFKGLYNRVGRYYFSSQEARELTMRFYLKLEKLAQDKNYSDVPALMRTNGIESGKMWQKLRDDLPAEMGHDKS.

The region spanning 6 to 74 (KGPASFAEKY…HGKPTQVNNF (69 aa)) is the HTH gntR-type domain. The H-T-H motif DNA-binding region spans 34-53 (ERELSELIGVTRTTLREVLQ).

As to quaternary structure, homodimer.

The protein resides in the cytoplasm. Its function is as follows. Multifunctional regulator of fatty acid metabolism. This is Fatty acid metabolism regulator protein from Shewanella frigidimarina (strain NCIMB 400).